Reading from the N-terminus, the 443-residue chain is Carboxypeptidase M (443 aa).

The N-terminal stretch at 1 to 17 (MDRARLWLGLLLPVVAA) is a signal peptide. The Peptidase M14 domain maps to 21–311 (RYHHQEGMEA…ASLIEYIKQV (291 aa)). Asn-38 carries an N-linked (GlcNAc...) asparagine glycan. 2 residues coordinate Zn(2+): His-83 and Glu-86. 3 cysteine pairs are disulfide-bonded: Cys-138–Cys-285, Cys-242–Cys-284, and Cys-341–Cys-410. An N-linked (GlcNAc...) asparagine glycan is attached at Asn-164. Zn(2+) is bound at residue His-190. The active-site Proton donor/acceptor is Glu-281. A glycan (N-linked (GlcNAc...) asparagine) is linked at Asn-363. Ser-423 is lipidated: GPI-anchor amidated serine. Positions 424-443 (AATKPSLGVFFMTLLYVFFK) are cleaved as a propeptide — removed in mature form.

It belongs to the peptidase M14 family. Zn(2+) is required as a cofactor.

It localises to the cell membrane. The catalysed reaction is Cleavage of C-terminal arginine or lysine residues from polypeptides.. In terms of biological role, specifically removes C-terminal basic residues (Arg or Lys) from peptides and proteins. It is believed to play important roles in the control of peptide hormone and growth factor activity at the cell surface, and in the membrane-localized degradation of extracellular proteins. This Mus musculus (Mouse) protein is Carboxypeptidase M (Cpm).